We begin with the raw amino-acid sequence, 207 residues long: Ras-related protein Rab-7a (207 aa).

Thr2 is subject to N-acetylthreonine. Residues Ser17, Gly18, Val19, Gly20, Lys21, Thr22, Ser23, Ser34, Asn35, Tyr37, and Thr40 each contribute to the GTP site. Residue Thr22 participates in Mg(2+) binding. Residues 28–41 (YVNKKFSNQYKATI) carry the Switch 1 motif. The Mg(2+) site is built by Thr40 and Asp63. Gly66 is a GTP binding site. Residues 67-82 (QERFQSLGVAFYRGAD) carry the Switch 2 motif. Ser72 bears the Phosphoserine mark. The GTP site is built by Asn125, Lys126, Asp128, Ala156, and Lys157. Glycyl lysine isopeptide (Lys-Gly) (interchain with G-Cter in ubiquitin) cross-links involve residues Lys191 and Lys194. 2 S-geranylgeranyl cysteine lipidation sites follow: Cys205 and Cys207. Cys207 is modified (cysteine methyl ester).

Belongs to the small GTPase superfamily. Rab family. As to quaternary structure, interacts with NTRK1/TRKA. Interacts with RILP. Interacts with PSMA7. Interacts with RNF115. Interacts with FYCO1. Interacts with the PIK3C3/VPS34-PIK3R4 complex. The GTP-bound form interacts with OSBPL1A. The GTP-bound form interacts with RAC1. Interacts with CLN3. Interacts with CHM, the substrate-binding subunit of the Rab geranylgeranyltransferase complex. Interacts with C9orf72. Does not interact with HPS4 and the BLOC-3 complex (heterodimer of HPS1 and HPS4). Interacts with CLN5. Interacts with PLEKHM1 (via N- and C-terminus). Interacts with PRPH; the interaction is direct. Interacts with VPS13A. The GDP-bound form interacts with RIMOC1. Interacts with the MON1A-CCZ1B complex and this interaction is enhanced in the presence of RIMOC1. Interacts with VPS39 and VPS41. Forms a ternary complex with LAMP2 and RUFY4; the interaction with LAMP2 is mediated by RUFY4 (via RUN and coiled coil domains). Requires Mg(2+) as cofactor. Deubiquitination at Lys-191 and Lys-194 by USP32. In terms of processing, phosphorylated at Ser-72 by LRRK1; phosphorylation is dependent on protein kinase C (PKC) activation of LRRK1. Post-translationally, prenylated. Prenylation is required for association with cellular membranes.

It is found in the cytoplasmic vesicle. The protein resides in the phagosome membrane. The protein localises to the late endosome membrane. Its subcellular location is the lysosome membrane. It localises to the melanosome membrane. It is found in the autophagosome membrane. The protein resides in the lipid droplet. The protein localises to the endosome membrane. Its subcellular location is the mitochondrion membrane. It carries out the reaction GTP + H2O = GDP + phosphate + H(+). With respect to regulation, regulated by guanine nucleotide exchange factors (GEFs) which promote the exchange of bound GDP for free GTP. Regulated by GTPase activating proteins (GAPs) which increase the GTP hydrolysis activity. Inhibited by GDP dissociation inhibitors (GDIs). The small GTPases Rab are key regulators of intracellular membrane trafficking, from the formation of transport vesicles to their fusion with membranes. Rabs cycle between an inactive GDP-bound form and an active GTP-bound form that is able to recruit to membranes different sets of downstream effectors directly responsible for vesicle formation, movement, tethering and fusion. In its active state, RAB7A binds to a variety of effector proteins playing a key role in the regulation of endo-lysosomal trafficking. Governs early-to-late endosomal maturation, microtubule minus-end as well as plus-end directed endosomal migration and positioning, and endosome-lysosome transport through different protein-protein interaction cascades. Also plays a central role in growth-factor-mediated cell signaling, nutrient-transporter-mediated nutrient uptake, neurotrophin transport in the axons of neurons and lipid metabolism. Also involved in regulation of some specialized endosomal membrane trafficking, such as maturation of melanosomes, pathogen-induced phagosomes (or vacuoles) and autophagosomes. Plays a role in the maturation and acidification of phagosomes that engulf pathogens, such as S.aureus and Mycobacteria. Plays a role in the fusion of phagosomes with lysosomes. In concert with RAC1, plays a role in regulating the formation of RBs (ruffled borders) in osteoclasts. Controls the endosomal trafficking and neurite outgrowth signaling of NTRK1/TRKA. Regulates the endocytic trafficking of the EGF-EGFR complex by regulating its lysosomal degradation. Involved in the ADRB2-stimulated lipolysis through lipophagy, a cytosolic lipase-independent autophagic pathway. Required for the exosomal release of SDCBP, CD63 and syndecan. Required for vesicular trafficking and cell surface expression of ACE2. May play a role in PRPH neuronal intermediate filament assembly. The chain is Ras-related protein Rab-7a (RAB7A) from Bos taurus (Bovine).